A 172-amino-acid chain; its full sequence is ATP-dependent kinase-like protein notR' (172 aa).

This sequence belongs to the YFH7 family.

Functionally, ATP-dependent kinase-like protein; part of the gene cluster that mediates the biosynthesis of notoamide, a fungal indole alkaloid that belongs to a family of natural products containing a characteristic bicyclo[2.2.2]diazaoctane core. The first step of notoamide biosynthesis involves coupling of L-proline and L-tryptophan by the bimodular NRPS notE', to produce cyclo-L-tryptophan-L-proline called brevianamide F. The reverse prenyltransferase notF' then acts as a deoxybrevianamide E synthase and converts brevianamide F to deoxybrevianamide E via reverse prenylation at C-2 of the indole ring leading to the bicyclo[2.2.2]diazaoctane core. Deoxybrevianamide E is further hydroxylated at C-6 of the indole ring, likely catalyzed by the cytochrome P450 monooxygenase notG', to yield 6-hydroxy-deoxybrevianamide E. 6-hydroxy-deoxybrevianamide E is a specific substrate of the prenyltransferase notC' for normal prenylation at C-7 to produce 6-hydroxy-7-prenyl-deoxybrevianamide, also called notoamide S. As the proposed pivotal branching point in notoamide biosynthesis, notoamide S can be diverted to notoamide E through an oxidative pyran ring closure putatively catalyzed by either notH' cytochrome P450 monooxygenase or the notD' FAD-linked oxidoreductase. This step would be followed by an indole 2,3-epoxidation-initiated pinacol-like rearrangement catalyzed by the notB' FAD-dependent monooxygenase leading to the formation of notoamide C and notoamide D. On the other hand notoamide S is converted to notoamide T by notH' (or notD'), a bifunctional oxidase that also functions as the intramolecular Diels-Alderase responsible for generation of (-)-notoamide T. To generate antipodal (+)-notoaminide T, notH (or notD) in Aspergillus strain MF297-2 is expected to catalyze a Diels-Alder reaction leading to the opposite stereochemistry. The remaining oxidoreductase notD' (or notH') likely catalyzes the oxidative pyran ring formation to yield (-)-stephacidin A. The FAD-dependent monooxygenase notI' is highly similar to notB' and is predicted to catalyze a similar conversion from (-)-stephacidin A to (+)-notoamide B via the 2,3-epoxidation of (-)-stephacidin A followed by a pinacol-type rearrangement. Finally, it remains unclear which enzyme could be responsible for the final hydroxylation steps leading to notoamide A and sclerotiamide. The function of notQ' in the notoamide biosynthesis has not been determined yet. This Aspergillus versicolor protein is ATP-dependent kinase-like protein notR'.